The primary structure comprises 228 residues: UPF0173 metal-dependent hydrolase Tpen_1493 (228 aa).

This sequence belongs to the UPF0173 family.

This chain is UPF0173 metal-dependent hydrolase Tpen_1493, found in Thermofilum pendens (strain DSM 2475 / Hrk 5).